The following is a 695-amino-acid chain: Elongation factor G (695 aa).

Residues glutamate 4–leucine 279 enclose the tr-type G domain. GTP is bound by residues alanine 13 to threonine 20, aspartate 79 to histidine 83, and asparagine 133 to aspartate 136.

It belongs to the TRAFAC class translation factor GTPase superfamily. Classic translation factor GTPase family. EF-G/EF-2 subfamily.

The protein localises to the cytoplasm. Its function is as follows. Catalyzes the GTP-dependent ribosomal translocation step during translation elongation. During this step, the ribosome changes from the pre-translocational (PRE) to the post-translocational (POST) state as the newly formed A-site-bound peptidyl-tRNA and P-site-bound deacylated tRNA move to the P and E sites, respectively. Catalyzes the coordinated movement of the two tRNA molecules, the mRNA and conformational changes in the ribosome. The sequence is that of Elongation factor G from Rhodopirellula baltica (strain DSM 10527 / NCIMB 13988 / SH1).